We begin with the raw amino-acid sequence, 248 residues long: Pyridoxal 4-dehydrogenase (248 aa).

11 to 35 (LVTGAAQGIGKAIAARLAADGATVI) serves as a coordination point for NAD(+). Residue Ser-141 coordinates substrate. The active-site Proton acceptor is the Tyr-154.

The protein belongs to the short-chain dehydrogenases/reductases (SDR) family. In terms of assembly, homotetramer.

The enzyme catalyses pyridoxal + NAD(+) = 4-pyridoxolactone + NADH + H(+). It participates in cofactor degradation; B6 vitamer degradation; 4-pyridoxate from pyridoxal: step 1/2. Functionally, involved in the degradation of pyridoxine or pyridoxamine (free, phosphate-unbound, forms of vitamin B6). Oxidizes pyridoxal to 4-pyridoxolactone, but does not have activity toward pyridoxal 5'-phosphate, pyridoxine, pyridoxamine, pyridoxamine 5'-phosphate, 4-phthalaldehyde, 2-nitrobenzaldehyde, pyridine, formaldehyde, 2-carboxybenzaldehyde or sugars. The polypeptide is Pyridoxal 4-dehydrogenase (Mesorhizobium japonicum (strain LMG 29417 / CECT 9101 / MAFF 303099) (Mesorhizobium loti (strain MAFF 303099))).